Here is a 286-residue protein sequence, read N- to C-terminus: Pheromone receptor transcription factor (286 aa).

The residue at position 2 (Ser2) is an N-acetylserine. Phosphoserine is present on Ser2. Positions 18 to 72 (RRKIEIKFIENKTRRHVTFSKRKHGIMKKAFELSVLTGTQVLLLVVSETGLVYTF) constitute an MADS-box domain. Residues 97 to 119 (PDDEEEDEEEDGDDDDDDDDDGN) show a composition bias toward acidic residues. The interval 97–137 (PDDEEEDEEEDGDDDDDDDDDGNDMQRQQPQQQQPQQQQQV) is disordered. The span at 122–136 (QRQQPQQQQPQQQQQ) shows a compositional bias: low complexity. Ser144 carries the phosphoserine modification. The disordered stretch occupies residues 167 to 264 (LGGANPNQNS…QQAFANAASP (98 aa)). A compositionally biased stretch (low complexity) spans 171-246 (NPNQNSMIQQ…QQQQQQQQQP (76 aa)).

As to quaternary structure, homodimer. Binds DNA with a high specificity in complex with mating-type protein ALPHA1. Also binds DNA with a high specificity as a heterotetramer consisting of an ALPHA2 dimer and an MCM1 dimer. Interacts with YHP1 and YOX1, possibly leading to its inactivation. Interacts with ARG80 and ARG82.

Its subcellular location is the nucleus. Its function is as follows. Transcription factor required for the efficient replication of minichromosomes and the transcriptional regulation of early cell cycle genes. Activates transcription of ECB-dependent genes during the G1/M phase. Genes that contain a ECB (early cell box) element in their transcription regulatory region are transcribed only during G1/M phases. Interacts with the alpha-2 repressor or with the alpha-1 activator thereby regulating the expression of mating-type-specific genes. With ARG80, ARG81 and ARG82, coordinates the expression of arginine anabolic and catabolic genes in response to arginine. In Saccharomyces cerevisiae (strain ATCC 204508 / S288c) (Baker's yeast), this protein is Pheromone receptor transcription factor (MCM1).